Consider the following 117-residue polypeptide: uncharacterized protein (117 aa).

The first 20 residues, 1-20, serve as a signal peptide directing secretion; it reads MAAVHLYIISFTALMISSTS.

This is an uncharacterized protein from Saccharomyces cerevisiae (strain ATCC 204508 / S288c) (Baker's yeast).